A 520-amino-acid polypeptide reads, in one-letter code: Sodium-dependent dicarboxylate transporter SdcS (520 aa).

Helical transmembrane passes span 30-50, 55-75, 77-97, 104-124, 160-180, 207-227, 242-262, 298-318, 323-343, 362-382, 399-419, 428-448, 452-472, and 491-511; these read AGQLIGLILGPLLFLLTLLFF, LPWKGVYVLAITLWIATWWIT, AIPIAATSLLPIVLLPLGHIL, SEYGNDIIFLFLGGFILAIAM, SMFVSNTAAVMIMIPIGLAII, IGYAGTIGGLGTLIGTPPLII, FAKWMIVGIPTVIVLLGITWL, KVVQTIFVLASLLWITREFLL, VTSSVADGTIAIFISILLFII, ELPWGVLILFGGGLALAKGIS, GVSPILIVIVITIFVLFLTEV, MILPILATLSVAVGVHPLLLM, AMAANCAYMLPVGTPPNAIIF, and LISAIIIILVVYYVMPIVLGI.

This sequence belongs to the SLC13A/DASS transporter (TC 2.A.47) family. NADC subfamily.

It localises to the cell membrane. Mediates the transport of the dicarboxylates fumarate, malate, and succinate across the cytoplasmic membrane via a Na(+)-electrochemical gradient. This Staphylococcus aureus (strain USA300) protein is Sodium-dependent dicarboxylate transporter SdcS (sdcS).